Consider the following 172-residue polypeptide: Large ribosomal subunit protein uL10 (172 aa).

The protein belongs to the universal ribosomal protein uL10 family. Part of the ribosomal stalk of the 50S ribosomal subunit. The N-terminus interacts with L11 and the large rRNA to form the base of the stalk. The C-terminus forms an elongated spine to which L12 dimers bind in a sequential fashion forming a multimeric L10(L12)X complex.

Its function is as follows. Forms part of the ribosomal stalk, playing a central role in the interaction of the ribosome with GTP-bound translation factors. The chain is Large ribosomal subunit protein uL10 from Francisella philomiragia subsp. philomiragia (strain ATCC 25017 / CCUG 19701 / FSC 153 / O#319-036).